Reading from the N-terminus, the 232-residue chain is LexA repressor (232 aa).

The disordered stretch occupies residues 1–25 (MSDDSSDSTSGAGSGRGRDSGLTER). Residues 16 to 25 (RGRDSGLTER) show a composition bias toward basic and acidic residues. The H-T-H motif DNA-binding region spans 46–66 (IREIGDAVGLTSTSSVAHQLR). Active-site for autocatalytic cleavage activity residues include serine 156 and lysine 193.

Belongs to the peptidase S24 family. Homodimer.

The enzyme catalyses Hydrolysis of Ala-|-Gly bond in repressor LexA.. Functionally, represses a number of genes involved in the response to DNA damage (SOS response), including recA and lexA. In the presence of single-stranded DNA, RecA interacts with LexA causing an autocatalytic cleavage which disrupts the DNA-binding part of LexA, leading to derepression of the SOS regulon and eventually DNA repair. The protein is LexA repressor of Mycolicibacterium vanbaalenii (strain DSM 7251 / JCM 13017 / BCRC 16820 / KCTC 9966 / NRRL B-24157 / PYR-1) (Mycobacterium vanbaalenii).